The chain runs to 777 residues: Subtilisin-like protease SBT3.3 (777 aa).

The signal sequence occupies residues 1–24; sequence MRSFRSSILLVLLSLITVLNATRA. Positions 25–111 are cleaved as a propeptide — removed in mature form; it reads RSETESKVHI…VIPDGFHELA (87 aa). The Inhibitor I9 domain maps to 32–109; the sequence is VHIVYLGEKK…VHVIPDGFHE (78 aa). In terms of domain architecture, Peptidase S8 spans 115–624; the sequence is TWEYLGLSSA…GGIVNPEKAA (510 aa). N-linked (GlcNAc...) asparagine glycosylation is present at asparagine 131. The active-site Charge relay system is aspartate 145. Asparagine 204 carries N-linked (GlcNAc...) asparagine glycosylation. The active-site Charge relay system is histidine 220. N-linked (GlcNAc...) asparagine glycosylation is found at asparagine 235, asparagine 397, asparagine 412, asparagine 508, and asparagine 540. One can recognise a PA domain in the interval 403-481; sequence VCESLNLNPN…ELGTDILSYI (79 aa). The active-site Charge relay system is serine 555. A glycan (N-linked (GlcNAc...) asparagine) is linked at asparagine 647.

This sequence belongs to the peptidase S8 family.

Its subcellular location is the secreted. It is found in the extracellular space. The protein localises to the extracellular matrix. Its function is as follows. Serine protease that plays a role in the control of the establishment of immune priming and systemic induced resistance. This is Subtilisin-like protease SBT3.3 from Arabidopsis thaliana (Mouse-ear cress).